Reading from the N-terminus, the 815-residue chain is MSGGAISIFGELNAHTYLGKAFFSSINYKIHQWPECRRRLGRRLMGPAQAAGPGKSSVDERNPNAAAATEINTNASIPLLQRECESFDEIQDRLTMMQDQLSRLTATLDNKQNLVDRVDQIGDKQSSMPTPPSTGHVVSDVDGQIQRYHGPWTLLAQCRQLESDLASWSKADHAAEVASLVTSMVQETMRVPSSSLSSFHTEIPGMGMCLPPRQLLSVMVECFLKNADYATSIFDHQSLYCAIDRVYRDPSNPEEKPWVLCFNLIILLTLGAEHSLQSEDPFVRPMLQAVQTAAGNSRLLMEPRLVSVQALALFSLFMQQCYPDNEPLGDGIFAQACVLARQMGLPQPHGYAATPSTLTAAEVDERHRVYQSLYIRNRYATTTSGALMWLPNSIMCTGTASAVGAHWELAKLQDEIHRVLGSCSFGSSDRRIKVAQLREKLRVWQEACLVAETQPMSMDRVILCLLFLGTRIYISMDNKETDTESFLDDCRLSCLLLIVSCTKHLRPDFSNQFHHLLRRLNPSRRNSDGSAHSSPSSTPSSSSTSSPLPSPASERPPPLDVVTRPSTGTSTPSSPTLLPLPRLANAFPITAIFILARHILGISAEGKPINTHRTVTEINSDILLLESLLFCFQNNPPFLGGKDQTLHCSYKLGQVLDHLVRIVHTMTSDRTSPRAHASGLPLVTEHAEMTDYMSRMFMTSKGSPASDLTGLWYPRDVTSDTPMELSIPDFQSVWPTPQDSLASSTNPLATAEGSIYTPALHPTPIIPNTPLDLSELFGFTNSDASEVWNLGTETTDLLENRRPSLKRQRTHFESQ.

The interval Pro-522–Leu-577 is disordered. The segment covering Ser-523–Pro-547 has biased composition (low complexity). Residues Leu-548–Leu-559 show a composition bias toward pro residues. The segment covering Thr-563–Leu-577 has biased composition (low complexity).

The protein localises to the nucleus. Its function is as follows. Putative transcription factor that may be involved in the regulation of the expression of the gene cluster that mediates the biosynthesis of phenalenones such as herqueinone, compounds that have been reported to treat tumors, bacterial infections and/or mycoses, and rheumatic diseases. The chain is Putative transcription factor phnE from Penicillium herquei.